We begin with the raw amino-acid sequence, 337 residues long: S-adenosylmethionine:tRNA ribosyltransferase-isomerase (337 aa).

It belongs to the QueA family. Monomer.

The protein localises to the cytoplasm. It carries out the reaction 7-aminomethyl-7-carbaguanosine(34) in tRNA + S-adenosyl-L-methionine = epoxyqueuosine(34) in tRNA + adenine + L-methionine + 2 H(+). The protein operates within tRNA modification; tRNA-queuosine biosynthesis. Functionally, transfers and isomerizes the ribose moiety from AdoMet to the 7-aminomethyl group of 7-deazaguanine (preQ1-tRNA) to give epoxyqueuosine (oQ-tRNA). In Legionella pneumophila (strain Corby), this protein is S-adenosylmethionine:tRNA ribosyltransferase-isomerase.